A 626-amino-acid polypeptide reads, in one-letter code: Bifurcating [FeFe] hydrogenase beta subunit (626 aa).

Position 198 to 201 (198 to 201 (GGGG)) interacts with NAD(+). Residues K207 and 224–228 (NGDEG) each bind FMN. D229 contacts NAD(+). FMN contacts are provided by residues 312–317 (FVCGEE) and 350–352 (INN). [4Fe-4S] cluster-binding residues include C485, C488, C491, C531, C578, C581, C584, C588, C608, C611, C614, and C618. 4Fe-4S ferredoxin-type domains lie at 569-598 (KKYVINPDICKGCGLCARSCPQNAITGERG) and 599-626 (KPYTIDQEKCVKCGLCASKCPFKAIELV).

Belongs to the complex I 51 kDa subunit family. As to quaternary structure, heterotrimer composed of HydA (alpha subunit), HydB (beta subunit) and HydC (gamma subunit). Near neutral and acidic pH conditions favor oligomerization of the heterotrimeric holoenzyme. The cofactor is [2Fe-2S] cluster. Requires [4Fe-4S] cluster as cofactor. FMN serves as cofactor.

It is found in the cytoplasm. It carries out the reaction 2 H2 + 2 oxidized [2Fe-2S]-[ferredoxin] + NAD(+) = 2 reduced [2Fe-2S]-[ferredoxin] + NADH + 3 H(+). In terms of biological role, catalyzes the oxidation of the physiological electron carriers NADH and reduced ferredoxin, coupled to the production of H(2). Acts as a bifurcating [FeFe] hydrogenase, which uses the exergonic oxidation of reduced ferredoxin to drive the unfavorable oxidation of NADH to produce H(2). The beta subunit contains flavin- and NAD-binding sites and is potentially the site for NADH oxidation, with the subsequent shuttling of electrons to the alpha subunit. The sequence is that of Bifurcating [FeFe] hydrogenase beta subunit from Thermotoga maritima (strain ATCC 43589 / DSM 3109 / JCM 10099 / NBRC 100826 / MSB8).